Reading from the N-terminus, the 246-residue chain is Hsp70 nucleotide exchange factor fes-1 (246 aa).

Residues Q23–A40 show a composition bias toward polar residues. The disordered stretch occupies residues Q23 to D63. ARM repeat units lie at residues T48–P92, L113–Q152, Q155–R196, and H214–K244.

It belongs to the FES1 family.

Its subcellular location is the cytoplasm. In terms of biological role, functions as a nucleotide exchange factor (NEF) for Hsp70 chaperones which accelerates the release of ADP. Required for fully efficient Hsp70-mediated folding of proteins. In Neurospora crassa (strain ATCC 24698 / 74-OR23-1A / CBS 708.71 / DSM 1257 / FGSC 987), this protein is Hsp70 nucleotide exchange factor fes-1 (fes-1).